The primary structure comprises 231 residues: Ion-translocating oxidoreductase complex subunit E (231 aa).

7 helical membrane passes run 18 to 38, 39 to 59, 69 to 89, 93 to 113, 127 to 147, 157 to 177, and 182 to 202; these read GLVQLLGLCPLLAVTATITNA, LGLGVATLLVLIGSNVLVSLV, IPVFVMIIAALVTCVQLLINA, NLYLSLGIFLPLIVTNCVIIG, SAFDGLMMGLGFTAVLVVLGA, LFGGADLLLGDWASVLTIHVW, and PFLLAMLPPGAFIGMGLLIAL.

It belongs to the NqrDE/RnfAE family. In terms of assembly, the complex is composed of six subunits: RnfA, RnfB, RnfC, RnfD, RnfE and RnfG.

The protein resides in the cell inner membrane. Part of a membrane-bound complex that couples electron transfer with translocation of ions across the membrane. The protein is Ion-translocating oxidoreductase complex subunit E of Shewanella frigidimarina (strain NCIMB 400).